The following is a 179-amino-acid chain: Protein GrpE (179 aa).

The disordered stretch occupies residues 1–45 (MSEEKLTQDPTAEEEQTETADQQESADVNWEQEAAHWKAQAEEHQ). A compositionally biased stretch (basic and acidic residues) spans 33–45 (EAAHWKAQAEEHQ).

It belongs to the GrpE family. Homodimer.

The protein localises to the cytoplasm. In terms of biological role, participates actively in the response to hyperosmotic and heat shock by preventing the aggregation of stress-denatured proteins, in association with DnaK and GrpE. It is the nucleotide exchange factor for DnaK and may function as a thermosensor. Unfolded proteins bind initially to DnaJ; upon interaction with the DnaJ-bound protein, DnaK hydrolyzes its bound ATP, resulting in the formation of a stable complex. GrpE releases ADP from DnaK; ATP binding to DnaK triggers the release of the substrate protein, thus completing the reaction cycle. Several rounds of ATP-dependent interactions between DnaJ, DnaK and GrpE are required for fully efficient folding. This is Protein GrpE from Brevibacillus choshinensis.